The primary structure comprises 93 residues: Large ribosomal subunit protein bL31B (93 aa).

It belongs to the bacterial ribosomal protein bL31 family. Type B subfamily. In terms of assembly, part of the 50S ribosomal subunit.

The polypeptide is Large ribosomal subunit protein bL31B (Psychrobacter arcticus (strain DSM 17307 / VKM B-2377 / 273-4)).